Here is a 243-residue protein sequence, read N- to C-terminus: tRNA (guanine-N(1)-)-methyltransferase (243 aa).

Residues Gly111 and Ile130–Leu135 contribute to the S-adenosyl-L-methionine site.

Belongs to the RNA methyltransferase TrmD family. As to quaternary structure, homodimer.

It localises to the cytoplasm. The enzyme catalyses guanosine(37) in tRNA + S-adenosyl-L-methionine = N(1)-methylguanosine(37) in tRNA + S-adenosyl-L-homocysteine + H(+). Its function is as follows. Specifically methylates guanosine-37 in various tRNAs. The polypeptide is tRNA (guanine-N(1)-)-methyltransferase (Acholeplasma laidlawii (strain PG-8A)).